We begin with the raw amino-acid sequence, 366 residues long: Chorismate synthase (366 aa).

NADP(+)-binding residues include arginine 48 and arginine 54. Residues 125-127, 238-239, glycine 278, 293-297, and arginine 319 contribute to the FMN site; these read RSS, NA, and KPTSS.

The protein belongs to the chorismate synthase family. In terms of assembly, homotetramer. FMNH2 is required as a cofactor.

The enzyme catalyses 5-O-(1-carboxyvinyl)-3-phosphoshikimate = chorismate + phosphate. Its pathway is metabolic intermediate biosynthesis; chorismate biosynthesis; chorismate from D-erythrose 4-phosphate and phosphoenolpyruvate: step 7/7. Its function is as follows. Catalyzes the anti-1,4-elimination of the C-3 phosphate and the C-6 proR hydrogen from 5-enolpyruvylshikimate-3-phosphate (EPSP) to yield chorismate, which is the branch point compound that serves as the starting substrate for the three terminal pathways of aromatic amino acid biosynthesis. This reaction introduces a second double bond into the aromatic ring system. The protein is Chorismate synthase of Burkholderia ambifaria (strain MC40-6).